We begin with the raw amino-acid sequence, 300 residues long: Cation-efflux pump FieF (300 aa).

4 helical membrane passes run 12–32 (AAIAATAMASLLLLIKIFAWW), 39–59 (ILAALVDSLVDIGASLTNLLV), 82–102 (AALAQSMFISGSALFLFLTGI), and 114–134 (PGVGVIVTIVALICTIILVSF). Asp45 and Asp49 together coordinate Zn(2+). Zn(2+) contacts are provided by His153 and Asp157. 2 helical membrane-spanning segments follow: residues 156-176 (SDVMMNGAILLALGLSWYGWH) and 178-198 (ADALFALGIGIYILYSALRMG).

Belongs to the cation diffusion facilitator (CDF) transporter (TC 2.A.4) family. FieF subfamily. Homodimer.

It is found in the cell inner membrane. The catalysed reaction is Zn(2+)(in) + H(+)(out) = Zn(2+)(out) + H(+)(in). It carries out the reaction Cd(2+)(in) + H(+)(out) = Cd(2+)(out) + H(+)(in). The enzyme catalyses Fe(2+)(in) + H(+)(out) = Fe(2+)(out) + H(+)(in). In terms of biological role, divalent metal cation transporter which exports Zn(2+), Cd(2+) and possibly Fe(2+). May be involved in zinc and iron detoxification by efflux. The polypeptide is Cation-efflux pump FieF (Shigella flexneri serotype 5b (strain 8401)).